The chain runs to 103 residues: Mitochondrial import inner membrane translocase subunit Tim10 B (103 aa).

Positions 28-52 (CFQRCVPSLHHRALDAEEEACLHSC) match the Twin CX3C motif motif. Cystine bridges form between cysteine 28–cysteine 52 and cysteine 32–cysteine 48.

The protein belongs to the small Tim family. In terms of assembly, component of the TIM22 complex, which core is composed of TIMM22, associated with TIMM10 (TIMM10A and/or TIMM10B), TIMM9, AGK and TIMM29. In terms of tissue distribution, ubiquitous, with highest expression in heart, kidney, liver and skeletal muscle.

It localises to the mitochondrion inner membrane. Component of the TIM22 complex, a complex that mediates the import and insertion of multi-pass transmembrane proteins into the mitochondrial inner membrane. The TIM22 complex forms a twin-pore translocase that uses the membrane potential as the external driving force. In the TIM22 complex, it may act as a docking point for the soluble 70 kDa complex that guides the target proteins in transit through the aqueous mitochondrial intermembrane space. This chain is Mitochondrial import inner membrane translocase subunit Tim10 B (TIMM10B), found in Homo sapiens (Human).